The chain runs to 469 residues: Diacetylchitobiose binding protein NgcE (469 aa).

A signal peptide (tat-type signal) is located at residues 1–37 (MTIRAGSLDRRTLLRGAIATAAMGSFAVACSSPSSED). A disordered region spans residues 30 to 54 (CSSPSSEDKESDSGPKGEKSANNPF). The segment covering 35 to 48 (SEDKESDSGPKGEK) has biased composition (basic and acidic residues).

Belongs to the bacterial solute-binding protein 1 family. As to quaternary structure, the complex is composed of two ATP-binding proteins (MsiK), two transmembrane proteins (NgcF and NgcG) and a solute-binding protein (NgcE). In terms of processing, predicted to be exported by the Tat system. The position of the signal peptide cleavage has not been experimentally proven.

The protein localises to the cell membrane. Functionally, part of the ABC transporter complex NgcEFG-MsiK involved in N,N'-diacetylchitobiose ((GlcNAc)2) uptake. Binds (GlcNAc)2. Can also bind GlcNAc. The sequence is that of Diacetylchitobiose binding protein NgcE from Streptomyces coelicolor (strain ATCC BAA-471 / A3(2) / M145).